The chain runs to 37 residues: Cytochrome b6-f complex subunit 5 (37 aa).

A helical membrane pass occupies residues 5–25 (LLFGIVLGLIPITLAGLFVTA).

It belongs to the PetG family. The 4 large subunits of the cytochrome b6-f complex are cytochrome b6, subunit IV (17 kDa polypeptide, PetD), cytochrome f and the Rieske protein, while the 4 small subunits are PetG, PetL, PetM and PetN. The complex functions as a dimer.

It is found in the plastid. Its subcellular location is the chloroplast thylakoid membrane. Component of the cytochrome b6-f complex, which mediates electron transfer between photosystem II (PSII) and photosystem I (PSI), cyclic electron flow around PSI, and state transitions. PetG is required for either the stability or assembly of the cytochrome b6-f complex. The chain is Cytochrome b6-f complex subunit 5 from Lemna minor (Common duckweed).